Reading from the N-terminus, the 447-residue chain is MTAHEVNFDGLVGLTHHYAGLSFGNEASTRHRFQVSNPLLAVKQGLLKMKALADAGFPQAVIPPHERPFIPALRQLGFSGNDEQILDKVARQAPRWLSRVSSASPMWVANAATVCPSADALDGKVHLTVANLNNKFHRSLEAPVTEALLRTIFRDESRFSLHSALPQVALLGDEGAANHNRLGGEYGLAGVQLFVYGREEGNEKRPARYPARQTREASEAVARLNQVNPQQVIFAQQNPEAIDQGVFHNDVIAVSNRQVLFCHEAAFARQERLINHLRTRVDGFMAIEVPADEVSVSDAVATYLFNSQLLSRDDGSMLLVLPQECQDHVGVWRYLNKLVAEDNPISAMQVFDLRESMANGGGPACLRLRVVLTEEEQRAVNPAVMMNDALFTALNAWAERFYRDRLTAADLADPLLLREGREALDVLTRLLDLGSVYPFQQTGAADG.

Substrate contacts are provided by residues 19-28, Asn110, and 137-138; these read AGLSFGNEAS and HR. Glu174 is an active-site residue. Arg212 is a binding site for substrate. The active site involves His248. Substrate is bound by residues Asp250 and Asn359. Residue Cys365 is the Nucleophile of the active site.

Belongs to the succinylarginine dihydrolase family. In terms of assembly, homodimer.

It catalyses the reaction N(2)-succinyl-L-arginine + 2 H2O + 2 H(+) = N(2)-succinyl-L-ornithine + 2 NH4(+) + CO2. The protein operates within amino-acid degradation; L-arginine degradation via AST pathway; L-glutamate and succinate from L-arginine: step 2/5. Catalyzes the hydrolysis of N(2)-succinylarginine into N(2)-succinylornithine, ammonia and CO(2). This Salmonella arizonae (strain ATCC BAA-731 / CDC346-86 / RSK2980) protein is N-succinylarginine dihydrolase.